A 390-amino-acid polypeptide reads, in one-letter code: Protein YghO (390 aa).

The sequence is that of Protein YghO (yghO) from Escherichia coli (strain K12).